We begin with the raw amino-acid sequence, 312 residues long: Transcription initiation factor IIB 1 (312 aa).

A TFIIB-type zinc finger spans residues 12–43 (EIERCPECGSTNLIRDYEHGELVCGECGAVIE). Zn(2+)-binding residues include Cys16, Cys19, Cys35, and Cys38. 2 consecutive repeat copies span residues 129–212 (QELE…SRYL) and 223–304 (DYIS…ELTE).

The protein belongs to the TFIIB family.

Functionally, stabilizes TBP binding to an archaeal box-A promoter. Also responsible for recruiting RNA polymerase II to the pre-initiation complex (DNA-TBP-TFIIB). The sequence is that of Transcription initiation factor IIB 1 from Thermoplasma volcanium (strain ATCC 51530 / DSM 4299 / JCM 9571 / NBRC 15438 / GSS1).